Consider the following 117-residue polypeptide: MDKKSARIRRATRARRKIKELGATRLVVHRTPRHIYAQVIAPNGSEVLVAASTLEKAVTEQLKYSGNKDAAAAVGKALAERALEKGISKVSFDRSGFQYHGRVQALADAAREAGLQF.

The protein belongs to the universal ribosomal protein uL18 family. In terms of assembly, part of the 50S ribosomal subunit; part of the 5S rRNA/L5/L18/L25 subcomplex. Contacts the 5S and 23S rRNAs.

Functionally, this is one of the proteins that bind and probably mediate the attachment of the 5S RNA into the large ribosomal subunit, where it forms part of the central protuberance. In Serratia proteamaculans (strain 568), this protein is Large ribosomal subunit protein uL18.